A 366-amino-acid polypeptide reads, in one-letter code: UDP-N-acetylglucosamine--N-acetylmuramyl-(pentapeptide) pyrophosphoryl-undecaprenol N-acetylglucosamine transferase (366 aa).

UDP-N-acetyl-alpha-D-glucosamine is bound by residues 10–12 (TGG), asparagine 124, arginine 166, serine 196, and glutamine 297.

The protein belongs to the glycosyltransferase 28 family. MurG subfamily.

The protein resides in the cell membrane. It carries out the reaction di-trans,octa-cis-undecaprenyl diphospho-N-acetyl-alpha-D-muramoyl-L-alanyl-D-glutamyl-meso-2,6-diaminopimeloyl-D-alanyl-D-alanine + UDP-N-acetyl-alpha-D-glucosamine = di-trans,octa-cis-undecaprenyl diphospho-[N-acetyl-alpha-D-glucosaminyl-(1-&gt;4)]-N-acetyl-alpha-D-muramoyl-L-alanyl-D-glutamyl-meso-2,6-diaminopimeloyl-D-alanyl-D-alanine + UDP + H(+). It participates in cell wall biogenesis; peptidoglycan biosynthesis. Functionally, cell wall formation. Catalyzes the transfer of a GlcNAc subunit on undecaprenyl-pyrophosphoryl-MurNAc-pentapeptide (lipid intermediate I) to form undecaprenyl-pyrophosphoryl-MurNAc-(pentapeptide)GlcNAc (lipid intermediate II). The sequence is that of UDP-N-acetylglucosamine--N-acetylmuramyl-(pentapeptide) pyrophosphoryl-undecaprenol N-acetylglucosamine transferase from Alkaliphilus metalliredigens (strain QYMF).